A 560-amino-acid polypeptide reads, in one-letter code: CPTPDAPQYACCLHGMPTFRESNPNPATRAVSTPNKLFDFKSLGYNYDNLDFHGMDTAHLEAAIKKQKQKDRVFAGFLLHGIKTSADVHLKVCNAADCHEAGVVFVLGARTEMPWHFDRNYKMDITDVLHEMHIPMEALFENDSKIHLEVEIQSVDGAILDSHSLPTPSLIYAPAKGLVSQHIEDHDTETLIRKNVNSLSPSEIKNLRDALVAVQADKSGNGYQKIASYHGMPLSCHYPNGTAFACCQHGMVTFPHWHRLYMKQMEDAMKAKGAKIGIPYWDWTTTFSHLPFLVTEPKNNPFHHGYIDVADTKTTRNPRPQLFDDPEQGDQSFFYRQIAFALEQRDFCDFEIQFEMGHNAIHSWVGGSSPYGMSTLHYTSYDPLFYLHHSNTDRIWAIWQALQKYRGLPYNSANCEINKLKKPMMPFSSDDNPNEVTKAHSTGTKHLNKIQEKDRVFAGFLLRAIGQSADVNFDICRKDGECKFGGTFCVLGGQHEMAWAFDRLFLYDISRTLLQLRLDAHDDFDVKVTIMGIDGKSLPTTLLPPPTILFKPGTGTQLTR.

An intrachain disulfide couples C1 to C11. Residues 1–184 (CPTPDAPQYA…AKGLVSQHIE (184 aa)) are unit G. Positions 12–14 (CLH) form a cross-link, 2'-(S-cysteinyl)-histidine (Cys-His). C93 and C98 are oxidised to a cystine. N-linked (GlcNAc...) asparagine glycosylation occurs at N142. The segment at 185–560 (DHDTETLIRK…KPGTGTQLTR (376 aa)) is unit H. H230 contacts Cu cation. C236 and C246 are oxidised to a cystine. An N-linked (GlcNAc...) asparagine glycan is attached at N240. The segment at residues 247-249 (CQH) is a cross-link (2'-(S-cysteinyl)-histidine (Cys-His)). H249, H258, H358, H362, and H389 together coordinate Cu cation. 2 disulfide bridges follow: C348/C415 and C476/C482.

The protein belongs to the tyrosinase family. Hemocyanin subfamily. In terms of assembly, decamers of large identical subunits (390 kDa), each containing 8 globular oxygen-binding functional units. It depends on Cu(2+) as a cofactor.

Its function is as follows. Hemocyanins are copper-containing oxygen carriers occurring freely dissolved in the hemolymph of many mollusks and arthropods. In Sepia officinalis (Common cuttlefish), this protein is Hemocyanin, units G and H.